The primary structure comprises 317 residues: Transaldolase (317 aa).

Lys132 (schiff-base intermediate with substrate) is an active-site residue.

This sequence belongs to the transaldolase family. Type 1 subfamily. In terms of assembly, homodimer.

The protein resides in the cytoplasm. The enzyme catalyses D-sedoheptulose 7-phosphate + D-glyceraldehyde 3-phosphate = D-erythrose 4-phosphate + beta-D-fructose 6-phosphate. It participates in carbohydrate degradation; pentose phosphate pathway; D-glyceraldehyde 3-phosphate and beta-D-fructose 6-phosphate from D-ribose 5-phosphate and D-xylulose 5-phosphate (non-oxidative stage): step 2/3. Transaldolase is important for the balance of metabolites in the pentose-phosphate pathway. The sequence is that of Transaldolase from Mannheimia succiniciproducens (strain KCTC 0769BP / MBEL55E).